The following is a 464-amino-acid chain: UDP-N-acetylmuramoylalanine--D-glutamate ligase (464 aa).

112–118 (GTDGKTT) provides a ligand contact to ATP.

The protein belongs to the MurCDEF family.

The protein localises to the cytoplasm. The catalysed reaction is UDP-N-acetyl-alpha-D-muramoyl-L-alanine + D-glutamate + ATP = UDP-N-acetyl-alpha-D-muramoyl-L-alanyl-D-glutamate + ADP + phosphate + H(+). It participates in cell wall biogenesis; peptidoglycan biosynthesis. Cell wall formation. Catalyzes the addition of glutamate to the nucleotide precursor UDP-N-acetylmuramoyl-L-alanine (UMA). In Chlorobium chlorochromatii (strain CaD3), this protein is UDP-N-acetylmuramoylalanine--D-glutamate ligase.